Consider the following 254-residue polypeptide: MDVKNKMVAESMSFYYDDYQALKNISIAFPENQVTALIGPSGCGKSTFLRCLNRMNDLVPKTRMSGRIMLGDLNIYNPKIDVVDLRKKIGMVFQKPNPFPKSIYDNIAYAPRIHGLVRTRQETDALVEDSLHKAGLWNEVKDRLNDLGTALSGGQQQRLCIARAIAMQPDVLLMDEPASALDPIATQKIEDLVLELKKRFTIIIVTHNMQQASRASDYTAFFYLGELIEFGKTDQIFTKPREKQTEDYITGRFG.

One can recognise an ABC transporter domain in the interval 7–249 (MVAESMSFYY…PREKQTEDYI (243 aa)). 39-46 (GPSGCGKS) is a binding site for ATP.

The protein belongs to the ABC transporter superfamily. Phosphate importer (TC 3.A.1.7) family. As to quaternary structure, the complex is composed of two ATP-binding proteins (PstB), two transmembrane proteins (PstC and PstA) and a solute-binding protein (PstS).

The protein resides in the cell inner membrane. The enzyme catalyses phosphate(out) + ATP + H2O = ADP + 2 phosphate(in) + H(+). In terms of biological role, part of the ABC transporter complex PstSACB involved in phosphate import. Responsible for energy coupling to the transport system. The protein is Phosphate import ATP-binding protein PstB of Chlorobium chlorochromatii (strain CaD3).